Here is a 482-residue protein sequence, read N- to C-terminus: Potential E3 ubiquitin-protein ligase ariadne-2 (482 aa).

A TRIAD supradomain region spans residues 125-334; that stretch reads AKGYCSVCAM…SEYYECSRYK (210 aa). Residues C129, C132, C145, H147, C150, C153, C172, C177, C218, C223, C239, C242, C247, C250, H255, C260, C287, and C290 each contribute to the Zn(2+) site. Residues 129–177 form an RING-type 1 zinc finger; sequence CSVCAMDGYTELPHLTCGHCFCEHCWKSHVESRLSEGVASRIECMESEC. An IBR-type zinc finger spans residues 198 to 260; sequence LKYERFLLRD…GADYHAPTSC (63 aa). Residues 287–316 form an RING-type 2; atypical zinc finger; that stretch reads CPQCHSCIEKAGGCNHIQCTRCRHHFCWMC. C300 is a catalytic residue. Residues C305, C308, C313, C316, H323, and C330 each contribute to the Zn(2+) site. Residues 433–459 are a coiled coil; the sequence is FEYQQAQLEKEVEELAWAVERADGTAR.

The protein belongs to the RBR family. Ariadne subfamily.

It is found in the nucleus. The catalysed reaction is [E2 ubiquitin-conjugating enzyme]-S-ubiquitinyl-L-cysteine + [acceptor protein]-L-lysine = [E2 ubiquitin-conjugating enzyme]-L-cysteine + [acceptor protein]-N(6)-ubiquitinyl-L-lysine.. Might act as an E3 ubiquitin-protein ligase, or as part of E3 complex, which accepts ubiquitin from specific E2 ubiquitin-conjugating enzymes, such as UBC-2/UBE2L3, and then transfers it to substrates. In Caenorhabditis elegans, this protein is Potential E3 ubiquitin-protein ligase ariadne-2.